The primary structure comprises 591 residues: Aspartate--tRNA ligase (591 aa).

An L-aspartate-binding site is contributed by glutamate 173. An aspartate region spans residues 197–200 (QLFK). Arginine 219 is an L-aspartate binding site. Residues 219 to 221 (RDE) and glutamine 228 contribute to the ATP site. Residue histidine 448 participates in L-aspartate binding. Glutamate 482 contacts ATP. Arginine 489 is an L-aspartate binding site. 534 to 537 (GLDR) is an ATP binding site.

It belongs to the class-II aminoacyl-tRNA synthetase family. Type 1 subfamily. As to quaternary structure, homodimer.

It is found in the cytoplasm. It catalyses the reaction tRNA(Asp) + L-aspartate + ATP = L-aspartyl-tRNA(Asp) + AMP + diphosphate. Its function is as follows. Catalyzes the attachment of L-aspartate to tRNA(Asp) in a two-step reaction: L-aspartate is first activated by ATP to form Asp-AMP and then transferred to the acceptor end of tRNA(Asp). The polypeptide is Aspartate--tRNA ligase (Shewanella sp. (strain MR-4)).